The chain runs to 162 residues: NADH-quinone oxidoreductase subunit I (162 aa).

2 consecutive 4Fe-4S ferredoxin-type domains span residues 52-82 and 93-122; these read LRRYPNGEERCIACKLCEAICPAQAITIEAG and VRYDIDMVKCIYCGLCQEACPVDAIVEGPN. Positions 62, 65, 68, 72, 102, 105, 108, and 112 each coordinate [4Fe-4S] cluster.

It belongs to the complex I 23 kDa subunit family. NDH-1 is composed of 14 different subunits. Subunits NuoA, H, J, K, L, M, N constitute the membrane sector of the complex. Requires [4Fe-4S] cluster as cofactor.

It is found in the cell inner membrane. It carries out the reaction a quinone + NADH + 5 H(+)(in) = a quinol + NAD(+) + 4 H(+)(out). Functionally, NDH-1 shuttles electrons from NADH, via FMN and iron-sulfur (Fe-S) centers, to quinones in the respiratory chain. The immediate electron acceptor for the enzyme in this species is believed to be ubiquinone. Couples the redox reaction to proton translocation (for every two electrons transferred, four hydrogen ions are translocated across the cytoplasmic membrane), and thus conserves the redox energy in a proton gradient. This chain is NADH-quinone oxidoreductase subunit I, found in Afipia carboxidovorans (strain ATCC 49405 / DSM 1227 / KCTC 32145 / OM5) (Oligotropha carboxidovorans).